Reading from the N-terminus, the 84-residue chain is Beta-cardiotoxin CTX9 (84 aa).

A signal peptide spans 1–21; sequence MKTLLLTLVVVTIVCLDLGYT. Intrachain disulfides connect Cys24/Cys43, Cys36/Cys61, Cys65/Cys76, and Cys77/Cys82.

The protein belongs to the three-finger toxin family. Short-chain subfamily. Aminergic toxin sub-subfamily. As to expression, expressed by the venom gland.

The protein localises to the secreted. In terms of biological role, acts as a beta-blocker by binding to beta-1 and beta-2 adrenergic receptors (ADRB1 and ADRB2). It dose-dependently decreases the heart rate (bradycardia), whereas conventional cardiotoxins increases it. At 100 mg/kg, intraperitoneal injection into mice provokes labored breathing, impaired locomotion, lack of response to external stimuli, and death (after 30 minutes). In Ophiophagus hannah (King cobra), this protein is Beta-cardiotoxin CTX9.